The following is a 192-amino-acid chain: Putative ripening-related protein 2 (192 aa).

An N-terminal signal peptide occupies residues 1-26 (MATTNCLLALAIAGLVLVSLPGLSRG).

The protein belongs to the kiwellin family.

Its subcellular location is the secreted. The chain is Putative ripening-related protein 2 from Oryza sativa subsp. japonica (Rice).